The primary structure comprises 267 residues: Tetrahydromethanopterin S-methyltransferase subunit C (267 aa).

8 consecutive transmembrane segments (helical) span residues 18–38 (LMAL…VNPV), 39–59 (IGPV…ADAI), 76–96 (YMSV…VFVV), 99–119 (IAVP…VAVL), 138–158 (ISGA…GSYT), 163–183 (LTSV…TMAI), 209–229 (FISM…WWLV), and 230–250 (SLIG…ASFE).

This sequence belongs to the MtrC family. In terms of assembly, the complex is composed of 8 subunits; MtrA, MtrB, MtrC, MtrD, MtrE, MtrF, MtrG and MtrH.

Its subcellular location is the cell membrane. The enzyme catalyses 5-methyl-5,6,7,8-tetrahydromethanopterin + coenzyme M + 2 Na(+)(in) = 5,6,7,8-tetrahydromethanopterin + methyl-coenzyme M + 2 Na(+)(out). The protein operates within one-carbon metabolism; methanogenesis from CO(2); methyl-coenzyme M from 5,10-methylene-5,6,7,8-tetrahydromethanopterin: step 2/2. In terms of biological role, part of a complex that catalyzes the formation of methyl-coenzyme M and tetrahydromethanopterin from coenzyme M and methyl-tetrahydromethanopterin. This is an energy-conserving, sodium-ion translocating step. This chain is Tetrahydromethanopterin S-methyltransferase subunit C, found in Methanothermobacter marburgensis (strain ATCC BAA-927 / DSM 2133 / JCM 14651 / NBRC 100331 / OCM 82 / Marburg) (Methanobacterium thermoautotrophicum).